The following is an 854-amino-acid chain: Protein translocase subunit SecA (854 aa).

ATP-binding positions include Q89, 107 to 111, and D501; that span reads GEGKT.

It belongs to the SecA family. In terms of assembly, monomer and homodimer. Part of the essential Sec protein translocation apparatus which comprises SecA, SecYEG and auxiliary proteins SecDF-YajC and YidC.

The protein localises to the cell inner membrane. Its subcellular location is the cytoplasm. The enzyme catalyses ATP + H2O + cellular proteinSide 1 = ADP + phosphate + cellular proteinSide 2.. Functionally, part of the Sec protein translocase complex. Interacts with the SecYEG preprotein conducting channel. Has a central role in coupling the hydrolysis of ATP to the transfer of proteins into and across the cell membrane, serving both as a receptor for the preprotein-SecB complex and as an ATP-driven molecular motor driving the stepwise translocation of polypeptide chains across the membrane. The polypeptide is Protein translocase subunit SecA (Pelagibacter ubique (strain HTCC1062)).